Reading from the N-terminus, the 948-residue chain is Phosphatidylinositol-glycan-specific phospholipase D (948 aa).

The signal sequence occupies residues 1–24 (MKNKIILLWLLLIVILCTISNVKG). Residues asparagine 39, asparagine 78, asparagine 148, asparagine 300, asparagine 433, asparagine 452, asparagine 506, and asparagine 535 are each glycosylated (N-linked (GlcNAc...) asparagine). 4 FG-GAP repeats span residues 451-512 (TNFT…SVTI), 526-588 (QVAT…NPAG), 596-656 (LPSI…RISG), and 663-724 (DADY…LNSF). N-linked (GlcNAc...) asparagine glycosylation is found at asparagine 749 and asparagine 788. FG-GAP repeat units lie at residues 799–861 (NLLL…LTND) and 895–948 (SSGG…NIFQ).

It belongs to the GPLD1 family. It depends on Ca(2+) as a cofactor.

It localises to the secreted. It carries out the reaction a 6-(alpha-D-glucosaminyl)-1-(1,2-diacyl-sn-glycero-3-phospho)-1D-myo-inositol + H2O = 6-(alpha-D-glucosaminyl)-1D-myo-inositol + a 1,2-diacyl-sn-glycero-3-phosphate + H(+). In terms of biological role, hydrolyzes the inositol phosphate linkage in proteins anchored by phosphatidylinositol glycans (GPI-anchor) thus releasing these proteins from the membrane. May also cleave GPI anchor intermediates intracellularly. The protein is Phosphatidylinositol-glycan-specific phospholipase D (pldG) of Dictyostelium discoideum (Social amoeba).